Reading from the N-terminus, the 155-residue chain is Aspartate carbamoyltransferase regulatory chain (155 aa).

Residues C113, C118, C139, and C142 each contribute to the Zn(2+) site.

It belongs to the PyrI family. As to quaternary structure, contains catalytic and regulatory chains. Zn(2+) serves as cofactor.

In terms of biological role, involved in allosteric regulation of aspartate carbamoyltransferase. The chain is Aspartate carbamoyltransferase regulatory chain from Methanospirillum hungatei JF-1 (strain ATCC 27890 / DSM 864 / NBRC 100397 / JF-1).